The chain runs to 141 residues: Hemoglobin subunit alpha-1/2 (141 aa).

One can recognise a Globin domain in the interval 1–141 (VLSPADKTNV…VSTVLTSKYR (141 aa)). A Phosphoserine modification is found at S3. K7 carries the post-translational modification N6-succinyllysine. Residue T8 is modified to Phosphothreonine. The residue at position 11 (K11) is an N6-succinyllysine. N6-acetyllysine; alternate is present on K16. K16 is modified (N6-succinyllysine; alternate). The residue at position 24 (Y24) is a Phosphotyrosine. S35 is subject to Phosphoserine. N6-succinyllysine is present on K40. S49 bears the Phosphoserine mark. H58 contacts O2. H87 is a binding site for heme b. S102 is modified (phosphoserine). Phosphothreonine is present on T108. Phosphoserine is present on residues S124 and S131. T134 and T137 each carry phosphothreonine. Phosphoserine is present on S138.

This sequence belongs to the globin family. Heterotetramer of two alpha chains and two beta chains. Red blood cells.

Involved in oxygen transport from the lung to the various peripheral tissues. In Macaca speciosa (Stump-tail macaque), this protein is Hemoglobin subunit alpha-1/2.